A 437-amino-acid polypeptide reads, in one-letter code: Eukaryotic peptide chain release factor subunit 1 (437 aa).

The short motif at 61-64 (NIKS) is the NIKS motif; plays an important role in translational termination element.

The protein belongs to the eukaryotic release factor 1 family. Component of the eRF1-eRF3-GTP ternary complex, composed of ETF1/ERF1 and eRF3 (GSPT1/ERF3A or GSPT2/ERF3B) and GTP.

It is found in the cytoplasm. Component of the eRF1-eRF3-GTP ternary complex, a ternary complex that mediates translation termination in response to the termination codons. The eRF1-eRF3-GTP complex binds to a stop codon in the ribosomal A-site. ETF1/ERF1 is responsible for stop codon recognition and inducing hydrolysis of peptidyl-tRNA. Following GTP hydrolysis, eRF3 (GSPT1/ERF3A or GSPT2/ERF3B) dissociates, permitting ETF1/eRF1 to accommodate fully in the A-site, followed by hydrolysis of peptidyl-tRNA. The chain is Eukaryotic peptide chain release factor subunit 1 (etf1) from Xenopus tropicalis (Western clawed frog).